The sequence spans 314 residues: MRQDLTGTPRFFRLTQGYPGRAHSAVNTLHRSVLLEETIVGLQVHPGGLYLDATVGLGGHSEAILRTESTRVVALDQDEDALAQARLRLAPFGERVRFEHINFAEFEPGEERFDGIVADLGVSSMQLDSPERGFSWRFESPLDMRMDGGGEAETAADLVNTCSAEQLSDLFWRYGEERFSRRIARRIVERRPLRTTTELAAVVASAIPTRQPIHPATRVFQALRIAVNGEVAALETFLERSPDWLVPGGRLAVISFHSLEDRPVKHRWRADPRLEVLTRKTITAGEAEIQSNPRARSARLRLARRLSPSEESRS.

Residues 58-60 (GGH), D76, F103, D119, and Q126 each bind S-adenosyl-L-methionine.

It belongs to the methyltransferase superfamily. RsmH family.

The protein localises to the cytoplasm. The catalysed reaction is cytidine(1402) in 16S rRNA + S-adenosyl-L-methionine = N(4)-methylcytidine(1402) in 16S rRNA + S-adenosyl-L-homocysteine + H(+). Its function is as follows. Specifically methylates the N4 position of cytidine in position 1402 (C1402) of 16S rRNA. The chain is Ribosomal RNA small subunit methyltransferase H from Gloeobacter violaceus (strain ATCC 29082 / PCC 7421).